A 297-amino-acid chain; its full sequence is CASP-like protein 4A2 (297 aa).

The interval 1–136 is disordered; that stretch reads MKMKRTVSSN…MNGEESATTA (136 aa). Over 1 to 149 the chain is Cytoplasmic; sequence MKMKRTVSSN…ARRDDLVSVT (149 aa). Residues 8–19 are compositionally biased toward low complexity; the sequence is SSNSEAYSYNES. A compositionally biased stretch (pro residues) spans 69–83; the sequence is LPSPIPPPPPQIPPP. A compositionally biased stretch (polar residues) spans 93–121; sequence MNSSLDKSPSSMVVQNSWVREDGQQNTTR. The helical transmembrane segment at 150–170 threads the bilayer; that stretch reads ALGFRITEVILCVISFSIMAA. Residues 171 to 189 are Extracellular-facing; it reads DKTQGWSGDSYDRYKEYRY. A helical transmembrane segment spans residues 190–210; the sequence is CLAVNVIAFVYSAFEACDAAC. Over 211–225 the chain is Cytoplasmic; sequence YMAKESYMMNCGFHD. Residues 226–246 form a helical membrane-spanning segment; it reads LFVFSMDQLLAYLLMSASSCA. The Extracellular segment spans residues 247-265; that stretch reads ATRVDDWVSNWGKDEFTQM. A helical transmembrane segment spans residues 266–286; the sequence is ATASIAVSFLAFGAFAVSALI. Topologically, residues 287–297 are cytoplasmic; it reads SSYRLFTHASS.

Belongs to the Casparian strip membrane proteins (CASP) family. In terms of assembly, homodimer and heterodimers.

The protein localises to the cell membrane. This chain is CASP-like protein 4A2, found in Arabidopsis lyrata subsp. lyrata (Lyre-leaved rock-cress).